Reading from the N-terminus, the 373-residue chain is Alpha-1,3-mannosyl-glycoprotein 4-beta-N-acetylglucosaminyltransferase-like protein MGAT4D (373 aa).

The Cytoplasmic portion of the chain corresponds to methionine 1–asparagine 5. The chain crosses the membrane as a helical; Signal-anchor for type II membrane protein span at residues valine 6–serine 26. The Lumenal portion of the chain corresponds to arginine 27–tyrosine 373. Asparagine 29, asparagine 54, and asparagine 144 each carry an N-linked (GlcNAc...) asparagine glycan.

It belongs to the glycosyltransferase 54 family. As to quaternary structure, isoform 2 self-associates; specifically in the endoplasmic reticulum prior to its translocation to the Golgi. Isoform 1 and isoform 2 interact with MGAT1, MGAT3 and MAN2A2; isoform 2 interacts specifically with MGAT1 in the Golgi. In terms of processing, isoform 2 is N-glycosylated; consisting of high-mannose and/or hybrid glycans. In terms of tissue distribution, isoform 1 and isoform 2 are specifically expressed in testis. Isoform 2 is expressed in spermatocytes but not in spermatids. Isoform 1 is expressed in spermatids.

Its subcellular location is the endoplasmic reticulum membrane. The protein resides in the endoplasmic reticulum-Golgi intermediate compartment membrane. The protein localises to the golgi apparatus membrane. In terms of biological role, may play a role in male spermatogenesis. In vitro acts as inhibitor of MGAT1 activity causing cell surface proteins to carry mainly high mannose N-glycans. The function is mediated by its lumenal domain and occurs specifically in the Golgi. A catalytic glucosyltransferase activity is not detected. May be involved in regulation of Sertoli-germ cell interactions during specific stages of spermatogenesis. The protein is Alpha-1,3-mannosyl-glycoprotein 4-beta-N-acetylglucosaminyltransferase-like protein MGAT4D of Mus musculus (Mouse).